A 445-amino-acid polypeptide reads, in one-letter code: Tubulin beta-1 chain (445 aa).

The short motif at 1-4 is the MREI motif element; sequence MREI. Positions 11, 69, 138, 142, 143, 144, 204, and 226 each coordinate GTP. Residue glutamate 69 coordinates Mg(2+). The interval 425–445 is disordered; that stretch reads YQDATAEEEGEFEEEGEEELA. Over residues 429 to 445 the composition is skewed to acidic residues; sequence TAEEEGEFEEEGEEELA. At glutamate 438 the chain carries 5-glutamyl polyglutamate.

It belongs to the tubulin family. As to quaternary structure, dimer of alpha and beta chains. A typical microtubule is a hollow water-filled tube with an outer diameter of 25 nm and an inner diameter of 15 nM. Alpha-beta heterodimers associate head-to-tail to form protofilaments running lengthwise along the microtubule wall with the beta-tubulin subunit facing the microtubule plus end conferring a structural polarity. Microtubules usually have 13 protofilaments but different protofilament numbers can be found in some organisms and specialized cells. It depends on Mg(2+) as a cofactor. In terms of processing, some glutamate residues at the C-terminus are polyglycylated, resulting in polyglycine chains on the gamma-carboxyl group. Glycylation is mainly limited to tubulin incorporated into axonemes (cilia and flagella) whereas glutamylation is prevalent in neuronal cells, centrioles, axonemes, and the mitotic spindle. Both modifications can coexist on the same protein on adjacent residues, and lowering polyglycylation levels increases polyglutamylation, and reciprocally. The precise function of polyglycylation is still unclear. Post-translationally, some glutamate residues at the C-terminus are polyglutamylated, resulting in polyglutamate chains on the gamma-carboxyl group. Polyglutamylation plays a key role in microtubule severing by spastin (SPAST). SPAST preferentially recognizes and acts on microtubules decorated with short polyglutamate tails: severing activity by SPAST increases as the number of glutamates per tubulin rises from one to eight, but decreases beyond this glutamylation threshold.

The protein resides in the cytoplasm. The protein localises to the cytoskeleton. In terms of biological role, tubulin is the major constituent of microtubules, a cylinder consisting of laterally associated linear protofilaments composed of alpha- and beta-tubulin heterodimers. Microtubules grow by the addition of GTP-tubulin dimers to the microtubule end, where a stabilizing cap forms. Below the cap, tubulin dimers are in GDP-bound state, owing to GTPase activity of alpha-tubulin. The polypeptide is Tubulin beta-1 chain (Gadus morhua (Atlantic cod)).